The following is a 238-amino-acid chain: Lipoprotein-releasing system ATP-binding protein LolD (238 aa).

One can recognise an ABC transporter domain in the interval 6 to 238; it reads LVCQGIRKVY…RSSLAQEMEA (233 aa). 42–49 lines the ATP pocket; sequence GSSGSGKS.

This sequence belongs to the ABC transporter superfamily. Lipoprotein translocase (TC 3.A.1.125) family. In terms of assembly, the complex is composed of two ATP-binding proteins (LolD) and two transmembrane proteins (LolC and LolE).

The protein resides in the cell inner membrane. Its function is as follows. Part of the ABC transporter complex LolCDE involved in the translocation of mature outer membrane-directed lipoproteins, from the inner membrane to the periplasmic chaperone, LolA. Responsible for the formation of the LolA-lipoprotein complex in an ATP-dependent manner. This is Lipoprotein-releasing system ATP-binding protein LolD from Aliivibrio fischeri (strain ATCC 700601 / ES114) (Vibrio fischeri).